The following is a 275-amino-acid chain: MISNKIAILLAVLVVAVACAQARVALKHRSVQALPRFLPRPKYDVGHRIVGGFEIDVSETPYQVSLQYFNSHRCGGSVLNSKWILTAAHCTVNLQPSSLAVRLGSSRHASGGTVVRVARVLEHPNYDDSTIDYDFSLMELESELTFSDVVQPVSLPDQDEAVEDGTMTIVSGWGNTQSAAESNAILRAANVPTVNQKECTIAYSSSGGITDRMLCAGYKRGGKDACQGDSGGPLVVDGKLVGVVSWGFGCAMPGYPGVYARVAVVRDWVRENSGA.

Positions 1–22 are cleaved as a signal peptide; sequence MISNKIAILLAVLVVAVACAQA. Residues 23–48 constitute a propeptide, activation peptide; sequence RVALKHRSVQALPRFLPRPKYDVGHR. The Peptidase S1 domain occupies 49–274; that stretch reads IVGGFEIDVS…VRDWVRENSG (226 aa). Cysteines 74 and 90 form a disulfide. Catalysis depends on charge relay system residues histidine 89 and aspartate 134. Disulfide bonds link cysteine 199–cysteine 215 and cysteine 226–cysteine 250. Catalysis depends on serine 230, which acts as the Charge relay system.

It belongs to the peptidase S1 family. Expressed in the midgut. Expression levels drop a few hours after blood feeding and pick up again 28 hours later.

The protein resides in the secreted. The enzyme catalyses Preferential cleavage: Arg-|-Xaa, Lys-|-Xaa.. Functionally, constitutive trypsin that is expressed 2 days after emergence, coinciding with host seeking behavior of the female. The sequence is that of Trypsin-3 (TRYP3) from Anopheles gambiae (African malaria mosquito).